The sequence spans 578 residues: MNIQALLSEKVRQAMIAAGAPADCEPQVRHSAKVQFGDYQANGMMAVAKKLGMTPRQLAEQVLTHLDLNGIASKVEIAGPGFINIFLDPAFLAEHVQQALASDRLGVSTPEKQTIVVDYSAPNVAKEMHVGHLRSTIIGDAAVRTLEFLGHKVIRANHVGDWGTQFGMLIAWLEKQQQENAGDEMELADLEGFYRDAKKHYDEDEEFAERARNYVVKLQSGDEYFREMWRKLVDITMTQNQITYDRLNVTLTRDDVMGESLYNPMLPGIVADLKAKGLAVESEGATVVFLDEFKNKEGEPMGVIIQKKDGGYLYTTTDIACAKYRYETLHADRVLYYIDSRQHQHLMQAWAIVRKAGYVPESVPLEHHMFGMMLGKDGKPFKTRAGGTVKLADLLDEALERARRLVAEKNPDMPADELEKLANAVGIGAVKYADLSKNRTTDYIFDWDNMLAFEGNTAPYMQYAYTRVLSVFRKAEINEEQLAAAPVIIREDREAQLAARLLQFEETLTVVAREGTPHVMCAYLYDLAGLFSGFYEHCPILSAENEEVRNSRLKLAQLTAKTLKLGLDTLGIETVERM.

The 'HIGH' region signature appears at 122–132 (PNVAKEMHVGH).

Belongs to the class-I aminoacyl-tRNA synthetase family. Monomer.

The protein localises to the cytoplasm. It carries out the reaction tRNA(Arg) + L-arginine + ATP = L-arginyl-tRNA(Arg) + AMP + diphosphate. The protein is Arginine--tRNA ligase of Shigella sonnei (strain Ss046).